The following is a 156-amino-acid chain: 6,7-dimethyl-8-ribityllumazine synthase (156 aa).

5-amino-6-(D-ribitylamino)uracil is bound by residues phenylalanine 22, 57 to 59 (AYE), and 81 to 83 (TVI). A (2S)-2-hydroxy-3-oxobutyl phosphate-binding site is contributed by 86–87 (GT). The Proton donor role is filled by histidine 89. 5-amino-6-(D-ribitylamino)uracil is bound at residue phenylalanine 114. Arginine 128 serves as a coordination point for (2S)-2-hydroxy-3-oxobutyl phosphate.

This sequence belongs to the DMRL synthase family. As to quaternary structure, forms an icosahedral capsid composed of 60 subunits, arranged as a dodecamer of pentamers.

It catalyses the reaction (2S)-2-hydroxy-3-oxobutyl phosphate + 5-amino-6-(D-ribitylamino)uracil = 6,7-dimethyl-8-(1-D-ribityl)lumazine + phosphate + 2 H2O + H(+). It participates in cofactor biosynthesis; riboflavin biosynthesis; riboflavin from 2-hydroxy-3-oxobutyl phosphate and 5-amino-6-(D-ribitylamino)uracil: step 1/2. Catalyzes the formation of 6,7-dimethyl-8-ribityllumazine by condensation of 5-amino-6-(D-ribitylamino)uracil with 3,4-dihydroxy-2-butanone 4-phosphate. This is the penultimate step in the biosynthesis of riboflavin. The polypeptide is 6,7-dimethyl-8-ribityllumazine synthase (Yersinia enterocolitica serotype O:8 / biotype 1B (strain NCTC 13174 / 8081)).